Reading from the N-terminus, the 107-residue chain is Large ribosomal subunit protein P2 (107 aa).

A compositionally biased stretch (low complexity) spans 63–83 (SSVPSGGSAPAAAAPSGGAAP). The segment at 63 to 107 (SSVPSGGSAPAAAAPSGGAAPKAEEKKKEEPKEESDDDMGFGLFD) is disordered. The span at 84–93 (KAEEKKKEEP) shows a compositional bias: basic and acidic residues.

It belongs to the eukaryotic ribosomal protein P1/P2 family. In terms of assembly, P1 and P2 exist as dimers at the large ribosomal subunit. Post-translationally, phosphorylated.

In terms of biological role, plays an important role in the elongation step of protein synthesis. The chain is Large ribosomal subunit protein P2 from Caenorhabditis elegans.